The sequence spans 431 residues: Enolase (431 aa).

Glutamine 166 is a binding site for (2R)-2-phosphoglycerate. The active-site Proton donor is glutamate 208. Aspartate 245, glutamate 288, and aspartate 315 together coordinate Mg(2+). Positions 340, 369, 370, and 391 each coordinate (2R)-2-phosphoglycerate. Lysine 340 acts as the Proton acceptor in catalysis.

This sequence belongs to the enolase family. It depends on Mg(2+) as a cofactor.

The protein resides in the cytoplasm. It is found in the secreted. Its subcellular location is the cell surface. It carries out the reaction (2R)-2-phosphoglycerate = phosphoenolpyruvate + H2O. Its pathway is carbohydrate degradation; glycolysis; pyruvate from D-glyceraldehyde 3-phosphate: step 4/5. Functionally, catalyzes the reversible conversion of 2-phosphoglycerate (2-PG) into phosphoenolpyruvate (PEP). It is essential for the degradation of carbohydrates via glycolysis. This Clostridium perfringens (strain 13 / Type A) protein is Enolase.